Reading from the N-terminus, the 308-residue chain is Protoheme IX farnesyltransferase (308 aa).

8 helical membrane passes run 20 to 40, 50 to 70, 102 to 122, 124 to 144, 149 to 169, 170 to 190, 227 to 249, and 288 to 308; these read LLAYLALTKPRVIELLLVTAI, AIHPLLMLNTLVGGMMAATGA, NALALGLTLTVISFFWLWCAT, LLAGVLALVTVAFYVFVYTLW, TSQNVVWGGAAGCMPVMIGWS, AITGTIAWPALAMFAIIFFWT, LIYTWLTVAATLVLALATSWLYG, and YLAVVFCALAVDSVIALPTLH.

Belongs to the UbiA prenyltransferase family. Protoheme IX farnesyltransferase subfamily.

The protein resides in the cell membrane. It catalyses the reaction heme b + (2E,6E)-farnesyl diphosphate + H2O = Fe(II)-heme o + diphosphate. It functions in the pathway porphyrin-containing compound metabolism; heme O biosynthesis; heme O from protoheme: step 1/1. Functionally, converts heme B (protoheme IX) to heme O by substitution of the vinyl group on carbon 2 of heme B porphyrin ring with a hydroxyethyl farnesyl side group. This Mycobacterium bovis (strain BCG / Pasteur 1173P2) protein is Protoheme IX farnesyltransferase.